A 213-amino-acid chain; its full sequence is Adenylate kinase (213 aa).

10-15 (GAGKGT) is an ATP binding site. The tract at residues 30–59 (STGDMFRAAIKEGTEMGKKAKEYMDKGALV) is NMP. AMP contacts are provided by residues T31, R36, 57–59 (ALV), 85–88 (GFPR), and Q92. Residues 126-163 (GRRVCKNCGASYHVIFNPPQAEGKCNSCNGELYQRSDD) form an LID region. R127 serves as a coordination point for ATP. 2 residues coordinate Zn(2+): C130 and C133. 136–137 (SY) is an ATP binding site. Positions 150 and 153 each coordinate Zn(2+). R160 and R171 together coordinate AMP. ATP is bound at residue Q199.

It belongs to the adenylate kinase family. In terms of assembly, monomer.

The protein resides in the cytoplasm. It carries out the reaction AMP + ATP = 2 ADP. The protein operates within purine metabolism; AMP biosynthesis via salvage pathway; AMP from ADP: step 1/1. Its function is as follows. Catalyzes the reversible transfer of the terminal phosphate group between ATP and AMP. Plays an important role in cellular energy homeostasis and in adenine nucleotide metabolism. The protein is Adenylate kinase of Desulforamulus reducens (strain ATCC BAA-1160 / DSM 100696 / MI-1) (Desulfotomaculum reducens).